Consider the following 436-residue polypeptide: Nicotinate phosphoribosyltransferase (436 aa).

The residue at position 231 (His-231) is a Phosphohistidine; by autocatalysis.

This sequence belongs to the NAPRTase family. In terms of processing, transiently phosphorylated on a His residue during the reaction cycle. Phosphorylation strongly increases the affinity for substrates and increases the rate of nicotinate D-ribonucleotide production. Dephosphorylation regenerates the low-affinity form of the enzyme, leading to product release.

The enzyme catalyses nicotinate + 5-phospho-alpha-D-ribose 1-diphosphate + ATP + H2O = nicotinate beta-D-ribonucleotide + ADP + phosphate + diphosphate. Its pathway is cofactor biosynthesis; NAD(+) biosynthesis; nicotinate D-ribonucleotide from nicotinate: step 1/1. Functionally, catalyzes the synthesis of beta-nicotinate D-ribonucleotide from nicotinate and 5-phospho-D-ribose 1-phosphate at the expense of ATP. The polypeptide is Nicotinate phosphoribosyltransferase (Vibrio parahaemolyticus serotype O3:K6 (strain RIMD 2210633)).